The following is a 216-amino-acid chain: Small ribosomal subunit protein uS3c (216 aa).

Positions 43-116 (IKNYVQKNMR…RLNIAITRVA (74 aa)) constitute a KH type-2 domain.

It belongs to the universal ribosomal protein uS3 family. In terms of assembly, part of the 30S ribosomal subunit.

It localises to the plastid. The protein localises to the chloroplast. This Drimys granadensis protein is Small ribosomal subunit protein uS3c (rps3).